A 226-amino-acid chain; its full sequence is UPF0758 protein SPJ_1027 (226 aa).

The MPN domain occupies 103–225 (SILSSQKLAK…YFSYREKTDL (123 aa)). Positions 174, 176, and 187 each coordinate Zn(2+). The JAMM motif signature appears at 174–187 (HNHPSGAVAPSQND).

This sequence belongs to the UPF0758 family.

In Streptococcus pneumoniae (strain JJA), this protein is UPF0758 protein SPJ_1027.